The following is a 60-amino-acid chain: Large ribosomal subunit protein uL30 (60 aa).

It belongs to the universal ribosomal protein uL30 family. In terms of assembly, part of the 50S ribosomal subunit.

This Shewanella sp. (strain ANA-3) protein is Large ribosomal subunit protein uL30.